The primary structure comprises 272 residues: Potassium channel regulatory protein (272 aa).

A BTB domain is found at 5–106 (ELVTLNVGGK…LLNPYLLQPR (102 aa)).

In terms of assembly, can form homooligomers. Interacts with KCNA1 (via cytoplasmic N-terminal domain) and KCNA4. In terms of tissue distribution, ubiquitous in normal tissues and expressed in some tumor tissues.

It is found in the endoplasmic reticulum. In terms of biological role, inhibits potassium fluxes in cells. May regulate Kv1 family channel proteins by retaining a fraction of channels in endomembranes. The polypeptide is Potassium channel regulatory protein (KCNRG) (Homo sapiens (Human)).